The sequence spans 353 residues: Stomatin-like protein 2, mitochondrial (353 aa).

The N-terminal 28 residues, 1–28 (MLARAARGTGALLLRGSVQASGRVPRRA), are a transit peptide targeting the mitochondrion. Ser-17 is subject to Phosphoserine; by PKC/PRKCZ. Tyr-124 carries the post-translational modification Phosphotyrosine. Lys-145 is subject to N6-acetyllysine; alternate. Position 145 is an N6-succinyllysine; alternate (Lys-145). Residues 215–252 (INVAEGKKQAQILASEAEKAEQINQAAGEASAVLAKAK) are a coiled coil. Lys-233 carries the post-translational modification N6-acetyllysine. The tract at residues 324–353 (VPGAQNSSQSRRDVQATDTSIEELGRVKLS) is disordered. Ser-330 bears the Phosphoserine mark.

This sequence belongs to the band 7/mec-2 family. As to quaternary structure, forms homooligomers. Interacts with MFN2; may form heterooligomers. Interacts with PHB1 and PHB2; recruits them to cardiolipin-enriched mitochondrial membranes and stabilizes them. Interacts with CACNA2D2.

It is found in the cell membrane. It localises to the mitochondrion. The protein localises to the mitochondrion inner membrane. The protein resides in the mitochondrion intermembrane space. Its subcellular location is the membrane raft. It is found in the cytoplasm. It localises to the cytoskeleton. Mitochondrial protein that probably regulates the biogenesis and the activity of mitochondria. Stimulates cardiolipin biosynthesis, binds cardiolipin-enriched membranes where it recruits and stabilizes some proteins including prohibitin and may therefore act in the organization of functional microdomains in mitochondrial membranes. Through regulation of the mitochondrial function may play a role into several biological processes including cell migration, cell proliferation, T-cell activation, calcium homeostasis and cellular response to stress. May play a role in calcium homeostasis through negative regulation of calcium efflux from mitochondria. Required for mitochondrial hyperfusion a pro-survival cellular response to stress which results in increased ATP production by mitochondria. May also regulate the organization of functional domains at the plasma membrane and play a role in T-cell activation through association with the T-cell receptor signaling complex and its regulation. This Mus musculus (Mouse) protein is Stomatin-like protein 2, mitochondrial (Stoml2).